A 452-amino-acid polypeptide reads, in one-letter code: Phosphoglucosamine mutase (452 aa).

Serine 108 serves as the catalytic Phosphoserine intermediate. Serine 108, aspartate 247, aspartate 249, and aspartate 251 together coordinate Mg(2+). Phosphoserine is present on serine 108.

Belongs to the phosphohexose mutase family. Mg(2+) serves as cofactor. Activated by phosphorylation.

It carries out the reaction alpha-D-glucosamine 1-phosphate = D-glucosamine 6-phosphate. Functionally, catalyzes the conversion of glucosamine-6-phosphate to glucosamine-1-phosphate. This is Phosphoglucosamine mutase from Burkholderia thailandensis (strain ATCC 700388 / DSM 13276 / CCUG 48851 / CIP 106301 / E264).